A 186-amino-acid polypeptide reads, in one-letter code: Peptidyl-tRNA hydrolase (186 aa).

Y14 provides a ligand contact to tRNA. H19 serves as the catalytic Proton acceptor. F64, N66, and N112 together coordinate tRNA.

The protein belongs to the PTH family. Monomer.

It localises to the cytoplasm. It carries out the reaction an N-acyl-L-alpha-aminoacyl-tRNA + H2O = an N-acyl-L-amino acid + a tRNA + H(+). Its function is as follows. Hydrolyzes ribosome-free peptidyl-tRNAs (with 1 or more amino acids incorporated), which drop off the ribosome during protein synthesis, or as a result of ribosome stalling. Catalyzes the release of premature peptidyl moieties from peptidyl-tRNA molecules trapped in stalled 50S ribosomal subunits, and thus maintains levels of free tRNAs and 50S ribosomes. The protein is Peptidyl-tRNA hydrolase of Listeria monocytogenes serotype 4a (strain HCC23).